The sequence spans 209 residues: Chaperone protein TorD (209 aa).

The protein belongs to the TorD/DmsD family. TorD subfamily.

The protein localises to the cytoplasm. Involved in the biogenesis of TorA. Acts on TorA before the insertion of the molybdenum cofactor and, as a result, probably favors a conformation of the apoenzyme that is competent for acquiring the cofactor. The polypeptide is Chaperone protein TorD (Shewanella sp. (strain ANA-3)).